Here is a 142-residue protein sequence, read N- to C-terminus: uncharacterized protein (142 aa).

The tract at residues 1–22 is disordered; the sequence is MSGSVNQNTDQHSQDSSSTPNN. The next 2 membrane-spanning stretches (helical) occupy residues 63-83 and 109-129; these read LFVM…VLLV and IIDG…FVDL.

It localises to the membrane. This is an uncharacterized protein from Acanthamoeba polyphaga mimivirus (APMV).